Here is a 443-residue protein sequence, read N- to C-terminus: Sperm-associated antigen 4 protein (443 aa).

Over residues 1 to 36 (MRRSPRSGSAASSHNHTPNFYSENSNSSHSATSGDS) the composition is skewed to low complexity. The tract at residues 1 to 107 (MRRSPRSGSA…VRGGASEPSG (107 aa)) is disordered. 2 helical membrane passes run 137–157 (FLSL…DGLV) and 168–188 (FLFT…WGLL). Residues 203–244 (TLSQYHHRVHSQGQQLQQLQAELNKLHKEVSSVRAAHSERVA) adopt a coiled-coil conformation. The SUN domain occupies 267–427 (GASIDLEKTS…YRVRAHGVRT (161 aa)).

Self-associates. Interacts with ODF1. May associate with microtubules. Interacts with SUN3 and SYNE1; suggesting the formation of a spermatogenesis-specific LINC complex; a SUN domain-based heterotrimer of SPAG4 and SUN3 may associate with SYNE1. Interacts with SEPT12 and LMNB1; during spermatogenesis. Isoform 1 is testis specific and is exclusively expressed in spermatids.

Its subcellular location is the membrane. It localises to the cytoplasm. It is found in the cytoskeleton. The protein resides in the nucleus envelope. The protein localises to the nucleus inner membrane. Its subcellular location is the flagellum axoneme. Its function is as follows. Involved in spermatogenesis. Required for sperm head formation but not required to establish and maintain general polarity of the sperm head. Required for anchoring and organization of the manchette. Required for targeting of SUN3 and probably SYNE1 through a probable SUN1:SYNE3 LINC complex to the nuclear envelope and involved in accurate posterior sperm head localization of the complex. May anchor SUN3 the nuclear envelope. Involved in maintenance of the nuclear envelope integrity. May assist the organization and assembly of outer dense fibers (ODFs), a specific structure of the sperm tail. This chain is Sperm-associated antigen 4 protein (Spag4), found in Mus musculus (Mouse).